The chain runs to 876 residues: Serrate RNA effector molecule homolog (876 aa).

Residues 1 to 90 form a disordered region; sequence MGDSDDEYDR…RRDWDEHSSD (90 aa). Residue glycine 2 is modified to N-acetylglycine. Serine 4 bears the Phosphoserine mark. Phosphotyrosine is present on tyrosine 8. A compositionally biased stretch (basic and acidic residues) spans 8 to 73; that stretch reads YDRRRRDKFR…ERFSPPRHEL (66 aa). Residues serine 67, serine 74, and serine 136 each carry the phosphoserine modification. A Glycyl lysine isopeptide (Lys-Gly) (interchain with G-Cter in SUMO2) cross-link involves residue lysine 150. A disordered region spans residues 271–412; it reads EEEEEQAGKP…KPKDAAGLEC (142 aa). The span at 297–347 shows a compositional bias: basic and acidic residues; that stretch reads DGERKTNDKDEKKEDGKQAENDSSNDDKTKKSEGDGDKEEKKEDSEKEAKK. The span at 370–387 shows a compositional bias: acidic residues; the sequence is SESESESGQAEEEKEEAE. Basic and acidic residues predominate over residues 388–412; it reads EALKEKEKPKEEEWEKPKDAAGLEC. Phosphoserine occurs at positions 493 and 540. At threonine 544 the chain carries Phosphothreonine. Serine 570 bears the Phosphoserine mark. Residues 575 to 598 form a disordered region; sequence ELLGSSGGAPPEEPPKEGNPAEIN. A Phosphothreonine modification is found at threonine 671. Residue serine 679 is modified to Phosphoserine. Arginine 833, arginine 840, and arginine 850 each carry omega-N-methylarginine. The tract at residues 835-854 is disordered; the sequence is NYDAFRGQGGYPGKPRNRMV.

Belongs to the ARS2 family. In terms of assembly, interacts with NCBP1 and DROSHA. Interacts with CASP8AP2 and ERBB4. Interacts with LUZP4. Interacts with NCBP2/CBP20 and NCBP3. Interacts with MTREX. Ubiquitously expressed.

It is found in the nucleus. The protein resides in the nucleoplasm. The protein localises to the cytoplasm. In terms of biological role, acts as a mediator between the cap-binding complex (CBC) and the primary microRNAs (miRNAs) processing machinery during cell proliferation. Contributes to the stability and delivery of capped primary miRNA transcripts to the primary miRNA processing complex containing DGCR8 and DROSHA, thereby playing a role in RNA-mediated gene silencing (RNAi) by miRNAs. Binds capped RNAs (m7GpppG-capped RNA); however interaction is probably mediated via its interaction with NCBP1/CBP80 component of the CBC complex. Involved in cell cycle progression at S phase. Does not directly confer arsenite resistance but rather modulates arsenic sensitivity. Independently of its activity on miRNAs, necessary and sufficient to promote neural stem cell self-renewal. Does so by directly binding SOX2 promoter and positively regulating its transcription. This chain is Serrate RNA effector molecule homolog (SRRT), found in Homo sapiens (Human).